A 208-amino-acid chain; its full sequence is Na(+)-translocating NADH-quinone reductase subunit D (208 aa).

Helical transmembrane passes span 42–62 (IVMGISVALVTGFSSFFISLV), 72–92 (IIVQMAIIASLVTLVDQLLQA), 103–123 (VFVGLIITNCIVMGRAEAFAM), 131–151 (LIDGIGNGAGYGIMLLVVATV), and 178–198 (NGLFLLAPSAFFIIGFLIWGL).

It belongs to the NqrDE/RnfAE family. Composed of six subunits; NqrA, NqrB, NqrC, NqrD, NqrE and NqrF.

Its subcellular location is the cell inner membrane. The enzyme catalyses a ubiquinone + n Na(+)(in) + NADH + H(+) = a ubiquinol + n Na(+)(out) + NAD(+). NQR complex catalyzes the reduction of ubiquinone-1 to ubiquinol by two successive reactions, coupled with the transport of Na(+) ions from the cytoplasm to the periplasm. NqrA to NqrE are probably involved in the second step, the conversion of ubisemiquinone to ubiquinol. The sequence is that of Na(+)-translocating NADH-quinone reductase subunit D from Neisseria meningitidis serogroup B (strain ATCC BAA-335 / MC58).